The primary structure comprises 430 residues: Asparagine--tRNA ligase (430 aa).

The protein belongs to the class-II aminoacyl-tRNA synthetase family. In terms of assembly, homodimer.

The protein resides in the cytoplasm. It catalyses the reaction tRNA(Asn) + L-asparagine + ATP = L-asparaginyl-tRNA(Asn) + AMP + diphosphate + H(+). This is Asparagine--tRNA ligase from Staphylococcus aureus (strain MSSA476).